Reading from the N-terminus, the 321-residue chain is Prephenate dehydratase (321 aa).

One can recognise a Prephenate dehydratase domain in the interval 3-189; the sequence is RIAYLGPEGT…ARTRFVLVGR (187 aa). The region spanning 203-280 is the ACT domain; that stretch reads SAVLRIDNQP…ADVRYLGSWP (78 aa).

In terms of assembly, homodimer.

It catalyses the reaction prephenate + H(+) = 3-phenylpyruvate + CO2 + H2O. The protein operates within amino-acid biosynthesis; L-phenylalanine biosynthesis; phenylpyruvate from prephenate: step 1/1. The protein is Prephenate dehydratase (pheA) of Mycobacterium bovis (strain ATCC BAA-935 / AF2122/97).